The primary structure comprises 556 residues: M-phase inducer phosphatase (556 aa).

2 disordered regions span residues 165–186 and 257–297; these read STDG…QERR and TSGL…RPRK. Residues 287–297 are compositionally biased toward basic residues; that stretch reads KSAHPNMRPRK. The region spanning 371 to 474 is the Rhodanese domain; it reads MFDNIMIIDC…FFAEHRSLCY (104 aa). The active site involves Cys-421. Residues 505–516 are compositionally biased toward polar residues; that stretch reads RAQTFAFGQQSP. The interval 505-556 is disordered; that stretch reads RAQTFAFGQQSPEMEDSPTGRCRNNPGDRKLLASPFNDSPGSRFPGRRMLSY.

This sequence belongs to the MPI phosphatase family.

It carries out the reaction O-phospho-L-tyrosyl-[protein] + H2O = L-tyrosyl-[protein] + phosphate. Functionally, this protein functions as a dosage-dependent inducer in mitotic control. It is a tyrosine protein phosphatase required for progression of the cell cycle. It may directly dephosphorylate p34(cdc2) and activate the p34(cdc2) kinase activity. This is M-phase inducer phosphatase (nimT) from Emericella nidulans (strain FGSC A4 / ATCC 38163 / CBS 112.46 / NRRL 194 / M139) (Aspergillus nidulans).